The primary structure comprises 488 residues: UDP-glycosyltransferase 85A3 (488 aa).

UDP-alpha-D-glucose-binding positions include Ser-306, 363–365 (CPQ), 380–388 (HCGWNSTLE), and 402–405 (FAEQ).

The protein belongs to the UDP-glycosyltransferase family. As to expression, expressed in roots and flowers.

This is UDP-glycosyltransferase 85A3 (UGT85A3) from Arabidopsis thaliana (Mouse-ear cress).